The primary structure comprises 99 residues: Putative pterin-4-alpha-carbinolamine dehydratase (99 aa).

The protein belongs to the pterin-4-alpha-carbinolamine dehydratase family.

It carries out the reaction (4aS,6R)-4a-hydroxy-L-erythro-5,6,7,8-tetrahydrobiopterin = (6R)-L-erythro-6,7-dihydrobiopterin + H2O. In Saccharolobus islandicus (strain M.16.27) (Sulfolobus islandicus), this protein is Putative pterin-4-alpha-carbinolamine dehydratase.